Consider the following 222-residue polypeptide: Proteoglycan 3 (222 aa).

A signal peptide spans 1-17 (MKQPLILSFLLLGMVSA). Residues 27–46 (NPKREESLKQEADGSREQGR) show a composition bias toward basic and acidic residues. Residues 27 to 100 (NPKREESLKQ…PKEEDTTHFQ (74 aa)) are disordered. The segment covering 71–81 (FEDEEAMESDP) has biased composition (acidic residues). The segment covering 83–97 (ALNKDSACPKEEDTT) has biased composition (basic and acidic residues). One can recognise a C-type lectin domain in the interval 105–221 (CKSCNYVLVR…CKSHLPFICS (117 aa)). 2 cysteine pairs are disulfide-bonded: C126/C220 and C197/C212.

Expressed in bone marrow, spleen, and thymus. Not detected in heart, liver or lung.

In terms of biological role, possesses similar cytotoxic and cytostimulatory activities to PRG2/MBP. The sequence is that of Proteoglycan 3 from Mus musculus (Mouse).